A 131-amino-acid chain; its full sequence is Global transcriptional regulator Spx (131 aa).

An intrachain disulfide couples cysteine 10 to cysteine 13.

Belongs to the ArsC family. Spx subfamily. In terms of assembly, interacts with the C-terminal domain of the alpha subunit of the RNAP.

Its subcellular location is the cytoplasm. Global transcriptional regulator that plays a key role in stress response and exerts either positive or negative regulation of genes. Acts by interacting with the C-terminal domain of the alpha subunit of the RNA polymerase (RNAP). This interaction can enhance binding of RNAP to the promoter region of target genes and stimulate their transcription, or block interaction of RNAP with activator. This chain is Global transcriptional regulator Spx, found in Listeria innocua serovar 6a (strain ATCC BAA-680 / CLIP 11262).